A 124-amino-acid polypeptide reads, in one-letter code: MPTINQLVRKGRSPKVAKTKAPALKNNPMRRGVCTRVYTTTPKKPNSALRKVARVRLAGGIEVTAYIPGVGHNLQEHSIVLVRGGRVKDLPGVRYKIVRGSLDTQGVKNRKQARSKYGAKMEKK.

Asp-89 carries the post-translational modification 3-methylthioaspartic acid. The interval 105–124 is disordered; it reads QGVKNRKQARSKYGAKMEKK.

Belongs to the universal ribosomal protein uS12 family. As to quaternary structure, part of the 30S ribosomal subunit. Contacts proteins S8 and S17. May interact with IF1 in the 30S initiation complex.

Functionally, with S4 and S5 plays an important role in translational accuracy. In terms of biological role, interacts with and stabilizes bases of the 16S rRNA that are involved in tRNA selection in the A site and with the mRNA backbone. Located at the interface of the 30S and 50S subunits, it traverses the body of the 30S subunit contacting proteins on the other side and probably holding the rRNA structure together. The combined cluster of proteins S8, S12 and S17 appears to hold together the shoulder and platform of the 30S subunit. This Renibacterium salmoninarum (strain ATCC 33209 / DSM 20767 / JCM 11484 / NBRC 15589 / NCIMB 2235) protein is Small ribosomal subunit protein uS12.